The chain runs to 95 residues: Bombyxin F-1 (95 aa).

The N-terminal stretch at 1-19 (MKLVVIVLLVISVSILVSA) is a signal peptide. 3 cysteine pairs are disulfide-bonded: C29/C82, C41/C95, and C81/C86. The propeptide at 53 to 71 (NSDMVYEDSGMPELLPADT) is c peptide like.

Belongs to the insulin family. Heterodimer of a B chain and an A chain linked by two disulfide bonds.

It localises to the secreted. The sequence is that of Bombyxin F-1 (BBXF1) from Bombyx mori (Silk moth).